We begin with the raw amino-acid sequence, 272 residues long: Phosphoglycolate phosphatase (272 aa).

Residue Asp19 is the Nucleophile of the active site. Mg(2+) contacts are provided by Asp19, Asp21, and Asp182.

It belongs to the HAD-like hydrolase superfamily. CbbY/CbbZ/Gph/YieH family. The cofactor is Mg(2+).

The enzyme catalyses 2-phosphoglycolate + H2O = glycolate + phosphate. It participates in organic acid metabolism; glycolate biosynthesis; glycolate from 2-phosphoglycolate: step 1/1. Specifically catalyzes the dephosphorylation of 2-phosphoglycolate. Is involved in the dissimilation of the intracellular 2-phosphoglycolate formed during the DNA repair of 3'-phosphoglycolate ends, a major class of DNA lesions induced by oxidative stress. The protein is Phosphoglycolate phosphatase of Pseudomonas fluorescens (strain Pf0-1).